A 100-amino-acid chain; its full sequence is Aspartyl/glutamyl-tRNA(Asn/Gln) amidotransferase subunit C (100 aa).

The protein belongs to the GatC family. As to quaternary structure, heterotrimer of A, B and C subunits.

The catalysed reaction is L-glutamyl-tRNA(Gln) + L-glutamine + ATP + H2O = L-glutaminyl-tRNA(Gln) + L-glutamate + ADP + phosphate + H(+). It catalyses the reaction L-aspartyl-tRNA(Asn) + L-glutamine + ATP + H2O = L-asparaginyl-tRNA(Asn) + L-glutamate + ADP + phosphate + 2 H(+). In terms of biological role, allows the formation of correctly charged Asn-tRNA(Asn) or Gln-tRNA(Gln) through the transamidation of misacylated Asp-tRNA(Asn) or Glu-tRNA(Gln) in organisms which lack either or both of asparaginyl-tRNA or glutaminyl-tRNA synthetases. The reaction takes place in the presence of glutamine and ATP through an activated phospho-Asp-tRNA(Asn) or phospho-Glu-tRNA(Gln). The protein is Aspartyl/glutamyl-tRNA(Asn/Gln) amidotransferase subunit C of Erythrobacter litoralis (strain HTCC2594).